The following is a 30-amino-acid chain: Cysteine-rich venom protein mossambin (30 aa).

A disordered region spans residues 1 to 30 (NVDFNSESTRRKKKQNEIVDLHNSLRRTVN).

The protein belongs to the CRISP family. Contains 8 disulfide bonds. As to expression, expressed by the venom gland.

The protein resides in the secreted. Inhibits calcium-activated potassium channels (KCa), voltage-gated potassium channel (Kv), and the calcium release channel/ryanodine receptor (RyR). The protein is Cysteine-rich venom protein mossambin of Naja mossambica (Mozambique spitting cobra).